A 360-amino-acid polypeptide reads, in one-letter code: MASTSFFPPRPSSTLAEIASLTKATLVDASYAEHRITGLASLDEAGPMHLSFFENLRYSDELANTRAGACLVSERFEGRVPSHVAVLRARRPFHAFVAYARHLYSDALRPHTGIGAPGIAPTAVIHETAKLEDEVTVEPLAVIGPDVEIGSGTVIGAGAVIAAGVKIGRDCDIGAGSHLQHALIGNNVLMHPGCHIGQDGFGFIFAGQHTKVPQTGRVIIQHDVELGAGTTIDRGSLRDTVIGEGTKIDNQVQIGHNVTIGRHCVIAAKCGLAGSLTLGDNVALGAMVGINNHVMIGDGAQVAAMSGVKDSIPAGERWGGIFARPTRTWFREMLAVRRLAEGSGAETAARPDDDRDEGRG.

The active-site Proton acceptor is the histidine 256. The segment at 341-360 is disordered; that stretch reads EGSGAETAARPDDDRDEGRG. Basic and acidic residues predominate over residues 349-360; it reads ARPDDDRDEGRG.

The protein belongs to the transferase hexapeptide repeat family. LpxD subfamily. As to quaternary structure, homotrimer.

The catalysed reaction is a UDP-3-O-[(3R)-3-hydroxyacyl]-alpha-D-glucosamine + a (3R)-hydroxyacyl-[ACP] = a UDP-2-N,3-O-bis[(3R)-3-hydroxyacyl]-alpha-D-glucosamine + holo-[ACP] + H(+). It functions in the pathway bacterial outer membrane biogenesis; LPS lipid A biosynthesis. Functionally, catalyzes the N-acylation of UDP-3-O-acylglucosamine using 3-hydroxyacyl-ACP as the acyl donor. Is involved in the biosynthesis of lipid A, a phosphorylated glycolipid that anchors the lipopolysaccharide to the outer membrane of the cell. The sequence is that of UDP-3-O-acylglucosamine N-acyltransferase from Rhodopseudomonas palustris (strain TIE-1).